Consider the following 355-residue polypeptide: Fructose-bisphosphate aldolase, cytoplasmic isozyme (355 aa).

Substrate is bound by residues Arg52 and Lys142. Residue Glu183 is the Proton acceptor of the active site. Lys225 acts as the Schiff-base intermediate with dihydroxyacetone-P in catalysis.

This sequence belongs to the class I fructose-bisphosphate aldolase family.

It is found in the cytoplasm. The enzyme catalyses beta-D-fructose 1,6-bisphosphate = D-glyceraldehyde 3-phosphate + dihydroxyacetone phosphate. It functions in the pathway carbohydrate degradation; glycolysis; D-glyceraldehyde 3-phosphate and glycerone phosphate from D-glucose: step 4/4. This chain is Fructose-bisphosphate aldolase, cytoplasmic isozyme, found in Zea mays (Maize).